A 233-amino-acid chain; its full sequence is Purine nucleoside phosphorylase DeoD-type (233 aa).

Residue histidine 4 participates in a purine D-ribonucleoside binding. Phosphate is bound by residues glycine 20, arginine 24, arginine 43, and 87 to 90; that span reads RIGT. A purine D-ribonucleoside is bound by residues 179–181 and 203–204; these read EME and SD. Aspartate 204 serves as the catalytic Proton donor.

It belongs to the PNP/UDP phosphorylase family. In terms of assembly, homohexamer; trimer of homodimers.

The enzyme catalyses a purine D-ribonucleoside + phosphate = a purine nucleobase + alpha-D-ribose 1-phosphate. The catalysed reaction is a purine 2'-deoxy-D-ribonucleoside + phosphate = a purine nucleobase + 2-deoxy-alpha-D-ribose 1-phosphate. Functionally, catalyzes the reversible phosphorolytic breakdown of the N-glycosidic bond in the beta-(deoxy)ribonucleoside molecules, with the formation of the corresponding free purine bases and pentose-1-phosphate. The protein is Purine nucleoside phosphorylase DeoD-type of Helicobacter pylori (strain HPAG1).